A 177-amino-acid polypeptide reads, in one-letter code: Large ribosomal subunit protein uL6 (177 aa).

This sequence belongs to the universal ribosomal protein uL6 family. As to quaternary structure, part of the 50S ribosomal subunit.

Its function is as follows. This protein binds to the 23S rRNA, and is important in its secondary structure. It is located near the subunit interface in the base of the L7/L12 stalk, and near the tRNA binding site of the peptidyltransferase center. The chain is Large ribosomal subunit protein uL6 from Proteus mirabilis (strain HI4320).